Here is a 158-residue protein sequence, read N- to C-terminus: Fluoride-specific ion channel FluC 2 (158 aa).

A run of 4 helical transmembrane segments spans residues 25-45, 63-83, 95-115, and 126-146; these read AWHG…IGGT, WTTF…MVVI, PFFG…AVDI, and TALA…RLAA. G103 and T106 together coordinate Na(+).

The protein belongs to the fluoride channel Fluc/FEX (TC 1.A.43) family.

It localises to the cell membrane. The enzyme catalyses fluoride(in) = fluoride(out). Its activity is regulated as follows. Na(+) is not transported, but it plays an essential structural role and its presence is essential for fluoride channel function. Its function is as follows. Fluoride-specific ion channel. Important for reducing fluoride concentration in the cell, thus reducing its toxicity. The chain is Fluoride-specific ion channel FluC 2 from Streptomyces avermitilis (strain ATCC 31267 / DSM 46492 / JCM 5070 / NBRC 14893 / NCIMB 12804 / NRRL 8165 / MA-4680).